The primary structure comprises 463 residues: Type I restriction enzyme StySPI specificity subunit (463 aa).

This sequence belongs to the type-I restriction system S methylase family. As to quaternary structure, the type I restriction/modification system is composed of three polypeptides R, M and S; the restriction enzyme has stoichiometry R(2)M(2)S(1) while the methyltransferase is M(2)S(1).

Functionally, the specificity (S) subunit of a type I restriction enzyme; this subunit dictates DNA sequence specificity. The M and S subunits together form a methyltransferase (MTase) that methylates A-2 on the top strand and A-3 on the bottom strand of the sequence 5'-AACN(6)GTRC-3'. In the presence of the R subunit the complex can also act as an endonuclease, binding to the same target sequence but cutting the DNA some distance from this site. Whether the DNA is cut or modified depends on the methylation state of the target sequence. When the target site is unmodified, the DNA is cut. When the target site is hemimethylated, the complex acts as a maintenance MTase modifying the DNA so that both strands become methylated. After locating a non-methylated recognition site, the enzyme complex serves as a molecular motor that translocates DNA in an ATP-dependent manner until a collision occurs that triggers cleavage. This Salmonella potsdam protein is Type I restriction enzyme StySPI specificity subunit.